A 262-amino-acid polypeptide reads, in one-letter code: Small ribosomal subunit protein eS4 (262 aa).

One can recognise an S4 RNA-binding domain in the interval Leu42–Val105.

It belongs to the eukaryotic ribosomal protein eS4 family.

This chain is Small ribosomal subunit protein eS4 (RPS4), found in Candida albicans (Yeast).